Consider the following 217-residue polypeptide: Large ribosomal subunit protein uL1 (217 aa).

Belongs to the universal ribosomal protein uL1 family. Part of the 50S ribosomal subunit.

Functionally, binds directly to 23S rRNA. Probably involved in E site tRNA release. In terms of biological role, protein L1 is also a translational repressor protein, it controls the translation of its operon by binding to its mRNA. In Thermoplasma acidophilum (strain ATCC 25905 / DSM 1728 / JCM 9062 / NBRC 15155 / AMRC-C165), this protein is Large ribosomal subunit protein uL1.